The primary structure comprises 379 residues: Trans-prenyltransferase abpB (379 aa).

Substrate contacts are provided by residues 90–91 (RL), arginine 112, lysine 197, arginine 264, lysine 266, tyrosine 268, and tyrosine 338.

Belongs to the tryptophan dimethylallyltransferase family.

The enzyme catalyses aspulvinone E + 2 dimethylallyl diphosphate = aspulvinone H + 2 diphosphate. The catalysed reaction is butyrolactone II + dimethylallyl diphosphate = butyrolactone I + diphosphate. Its pathway is secondary metabolite biosynthesis. Functionally, trans-prenyltransferase that acts in both the aspulvinones and butyrolactones pathways. Prenylates aspulvinone E and butyrolactone II to yield repectively aspulvinone H and butyrolactone I. The chain is Trans-prenyltransferase abpB from Aspergillus terreus (strain NIH 2624 / FGSC A1156).